Here is a 62-residue protein sequence, read N- to C-terminus: Photosystem II reaction center protein H (62 aa).

A helical membrane pass occupies residues 30-50 (PVMAGIGFMLLIFLVTILQIY).

Belongs to the PsbH family. In terms of assembly, PSII is composed of 1 copy each of membrane proteins PsbA, PsbB, PsbC, PsbD, PsbE, PsbF, PsbH, PsbI, PsbJ, PsbK, PsbL, PsbM, PsbT, PsbX, PsbY, Psb30/Ycf12, peripheral proteins PsbO, CyanoQ (PsbQ), PsbU, PsbV and a large number of cofactors. It forms dimeric complexes.

It localises to the cellular thylakoid membrane. One of the components of the core complex of photosystem II (PSII), required for its stability and/or assembly. PSII is a light-driven water:plastoquinone oxidoreductase that uses light energy to abstract electrons from H(2)O, generating O(2) and a proton gradient subsequently used for ATP formation. It consists of a core antenna complex that captures photons, and an electron transfer chain that converts photonic excitation into a charge separation. The polypeptide is Photosystem II reaction center protein H (Prochlorococcus marinus (strain MIT 9303)).